We begin with the raw amino-acid sequence, 88 residues long: ATP synthase subunit c 2 (88 aa).

The next 2 membrane-spanning stretches (helical) occupy residues phenylalanine 4–isoleucine 24 and isoleucine 53–leucine 73.

Belongs to the ATPase C chain family. In terms of assembly, F-type ATPases have 2 components, F(1) - the catalytic core - and F(0) - the membrane proton channel. F(1) has five subunits: alpha(3), beta(3), gamma(1), delta(1), epsilon(1). F(0) has three main subunits: a(1), b(2) and c(10-14). The alpha and beta chains form an alternating ring which encloses part of the gamma chain. F(1) is attached to F(0) by a central stalk formed by the gamma and epsilon chains, while a peripheral stalk is formed by the delta and b chains.

It localises to the cell inner membrane. Its function is as follows. F(1)F(0) ATP synthase produces ATP from ADP in the presence of a proton or sodium gradient. F-type ATPases consist of two structural domains, F(1) containing the extramembraneous catalytic core and F(0) containing the membrane proton channel, linked together by a central stalk and a peripheral stalk. During catalysis, ATP synthesis in the catalytic domain of F(1) is coupled via a rotary mechanism of the central stalk subunits to proton translocation. Functionally, key component of the F(0) channel; it plays a direct role in translocation across the membrane. A homomeric c-ring of between 10-14 subunits forms the central stalk rotor element with the F(1) delta and epsilon subunits. The protein is ATP synthase subunit c 2 of Syntrophotalea carbinolica (strain DSM 2380 / NBRC 103641 / GraBd1) (Pelobacter carbinolicus).